A 726-amino-acid polypeptide reads, in one-letter code: MSTSDDIHNTTATGKCPFHQGGHDQSAGGGTTTRDWWPNQLRVDLLNQHSNRSNPLGEDFDYRKEFSKLDYYGLKKDLKALLTESQPWWPADWGSYAGLFIRMAWHGAGTYRSIDGRGGAGRGQQRFAPLNSWPDNVSLDKARRLLWPIKQKYGQKISWADLFILAGNVALESSGFRTFGFGAGREDVWEPDLDVNWGDEKAWLTHRHPEALAKAPLGATEMGLIYVNPEGPDHSGEPLSAAAAIRATFGNMGMNDEETVALIAGGHTLGKTHGAGPTSNVGPDPEAAPIEEQGLGWASTYGSGVGADAITSGLEVVWTQTPTQWSNYFFENLFKYEWVQTRSPAGAIQFEAVDAPEIIPDPFDPSKKRKPTMLVTDLTLRFDPEFEKISRRFLNDPQAFNEAFARAWFKLTHRDMGPKSRYIGPEVPKEDLIWQDPLPQPIYNPTEQDIIDLKFAIADSGLSVSELVSVAWASASTFRGGDKRGGANGARLALMPQRDWDVNAAAVRALPVLEKIQKESGKASLADIIVLAGVVGVEKAASAAGLSIHVPFAPGRVDARQDQTDIEMFELLEPIADGFRNYRARLDVSTTESLLIDKAQQLTLTAPEMTALVGGMRVLGANFDGSKNGVFTDRVGVLSNDFFVNLLDMRYEWKATDESKELFEGRDRETGEVKYTASRADLVFGSNSVLRAVAEVYASSDAHEKFVKDFVAAWVKVMNLDRFDLL.

The segment at 1 to 33 (MSTSDDIHNTTATGKCPFHQGGHDQSAGGGTTT) is disordered. A cross-link (tryptophyl-tyrosyl-methioninium (Trp-Tyr) (with M-252)) is located at residues 105-226 (WHGAGTYRSI…LGATEMGLIY (122 aa)). His-106 acts as the Proton acceptor in catalysis. Residues 226–252 (YVNPEGPDHSGEPLSAAAAIRATFGNM) constitute a cross-link (tryptophyl-tyrosyl-methioninium (Tyr-Met) (with W-105)). Heme b is bound at residue His-267.

It belongs to the peroxidase family. Peroxidase/catalase subfamily. Homodimer or homotetramer. It depends on heme b as a cofactor. Formation of the three residue Trp-Tyr-Met cross-link is important for the catalase, but not the peroxidase activity of the enzyme.

It carries out the reaction H2O2 + AH2 = A + 2 H2O. The catalysed reaction is 2 H2O2 = O2 + 2 H2O. In terms of biological role, bifunctional enzyme with both catalase and broad-spectrum peroxidase activity. This is Catalase-peroxidase from Escherichia coli (strain UTI89 / UPEC).